Here is a 239-residue protein sequence, read N- to C-terminus: mRNA turnover protein 4 homolog (239 aa).

Residues 216–239 form a disordered region; sequence QQMGDDLPESAPESEGESEEEDDS. A compositionally biased stretch (acidic residues) spans 221-239; that stretch reads DLPESAPESEGESEEEDDS. Phosphoserine is present on residues Ser225, Ser229, and Ser233.

The protein belongs to the universal ribosomal protein uL10 family. Associates with the pre-60S ribosomal particle. Interacts with MINAS-60 (product of an alternative open reading frame of RBM10).

It is found in the nucleus. It localises to the nucleolus. Its subcellular location is the cytoplasm. Its function is as follows. Component of the ribosome assembly machinery. Nuclear paralog of the ribosomal protein P0, it binds pre-60S subunits at an early stage of assembly in the nucleolus, and is replaced by P0 in cytoplasmic pre-60S subunits and mature 80S ribosomes. The protein is mRNA turnover protein 4 homolog (MRTO4) of Bos taurus (Bovine).